Consider the following 144-residue polypeptide: Large-conductance mechanosensitive channel (144 aa).

2 helical membrane-spanning segments follow: residues 14–34 and 81–101; these read VLDM…VTSF and GTFL…FLII.

The protein belongs to the MscL family. Homopentamer.

Its subcellular location is the cell inner membrane. Its function is as follows. Channel that opens in response to stretch forces in the membrane lipid bilayer. May participate in the regulation of osmotic pressure changes within the cell. This chain is Large-conductance mechanosensitive channel, found in Bdellovibrio bacteriovorus (strain ATCC 15356 / DSM 50701 / NCIMB 9529 / HD100).